The chain runs to 415 residues: von Willebrand factor A domain-containing protein 1 (415 aa).

Residues 1-18 form the signal peptide; that stretch reads MLFWTAFSMALSLRLALA. The 176-residue stretch at 34–209 folds into the VWFA domain; the sequence is DLLFLLDSSA…IIARELRGSI (176 aa). Phosphoserine is present on residues Ser-74, Ser-80, and Ser-93. Fibronectin type-III domains follow at residues 214–305 and 307–403; these read QPQQ…LQEE and GPER…TRAP. Asn-264 is a glycosylation site (N-linked (GlcNAc...) asparagine). Cysteines 369 and 393 form a disulfide. Residues 391 to 415 form a disordered region; sequence KACTASGARTRAPQSMRPEAGPREP.

In terms of assembly, homodimer or homomultimer; disulfide-linked. Interacts with HSPG2. Post-translationally, N-glycosylated. As to expression, expressed at high levels in the chondrocytes. Detected in the vasculature of neural tissues, in basement membrane structures of the peripheral nervous system, in the apical ectodermal ridge of developing limb buds, and in skeletal and cardiac muscle (at protein level).

It is found in the secreted. It localises to the extracellular space. The protein resides in the extracellular matrix. The protein localises to the basement membrane. Its function is as follows. Promotes matrix assembly. Involved in the organization of skeletal muscles and in the formation of neuromuscular junctions. In Mus musculus (Mouse), this protein is von Willebrand factor A domain-containing protein 1 (Vwa1).